Consider the following 930-residue polypeptide: Isoleucine--tRNA ligase (930 aa).

The short motif at 57 to 67 is the 'HIGH' region element; it reads PYANGNIHVGH. E554 contributes to the L-isoleucyl-5'-AMP binding site. The 'KMSKS' region signature appears at 595–599; the sequence is KMSKS. Residue K598 participates in ATP binding. Residues C888, C891, C908, and C911 each coordinate Zn(2+).

It belongs to the class-I aminoacyl-tRNA synthetase family. IleS type 1 subfamily. As to quaternary structure, monomer. Requires Zn(2+) as cofactor.

It is found in the cytoplasm. It catalyses the reaction tRNA(Ile) + L-isoleucine + ATP = L-isoleucyl-tRNA(Ile) + AMP + diphosphate. Its function is as follows. Catalyzes the attachment of isoleucine to tRNA(Ile). As IleRS can inadvertently accommodate and process structurally similar amino acids such as valine, to avoid such errors it has two additional distinct tRNA(Ile)-dependent editing activities. One activity is designated as 'pretransfer' editing and involves the hydrolysis of activated Val-AMP. The other activity is designated 'posttransfer' editing and involves deacylation of mischarged Val-tRNA(Ile). The protein is Isoleucine--tRNA ligase of Streptococcus pneumoniae serotype 19F (strain G54).